Consider the following 113-residue polypeptide: Large ribosomal subunit protein uL24 (113 aa).

This sequence belongs to the universal ribosomal protein uL24 family. In terms of assembly, part of the 50S ribosomal subunit.

One of two assembly initiator proteins, it binds directly to the 5'-end of the 23S rRNA, where it nucleates assembly of the 50S subunit. Functionally, one of the proteins that surrounds the polypeptide exit tunnel on the outside of the subunit. This chain is Large ribosomal subunit protein uL24 (rplX), found in Fusobacterium nucleatum subsp. nucleatum (strain ATCC 25586 / DSM 15643 / BCRC 10681 / CIP 101130 / JCM 8532 / KCTC 2640 / LMG 13131 / VPI 4355).